The primary structure comprises 258 residues: MKFLVLALTILLAAGTQAFPMQADAPSQLEHVKAALNMYIAQVKLTAQRSIDLLDDTEYKEYKMQLSQSLDNLQQFADSTSKSWPPTPRSSAPSCDATATVRAEVMKDVEDVRTQLEPKRAELTEVLNKHIDEYRKKLEPLIKQHIELRRTEMDAFRAKIDPVVEEMRAKVAVNVEETKTKLMPIVEIVRAKLTERLEELRTLAAPYAEEYKEQMFKAVGEVREKVAPLSEDFKARWAPPPRRPSKSSWLSTRPSARP.

The signal sequence occupies residues 1–18; the sequence is MKFLVLALTILLAAGTQA. A 3 X approximate tandem repeats region spans residues 32-63; sequence VKAALNMYIAQVKLTAQRSIDLLDDTEYKEYK. Repeat copies occupy residues 64-85 and 86-106. Positions 64-258 are 10 X approximate tandem repeats; sequence MQLSQSLDNL…WLSTRPSARP (195 aa). A 3; half-length repeat occupies 107–117; the sequence is KDVEDVRTQLE. 7 tandem repeats follow at residues 118-139, 140-161, 162-183, 184-205, 206-227, 228-238, and 239-258. Positions 233–258 are disordered; sequence FKARWAPPPRRPSKSSWLSTRPSARP. Polar residues predominate over residues 246–258; the sequence is KSSWLSTRPSARP.

This sequence belongs to the apolipoprotein A1/A4/E family. Major protein of plasma HDL, also found in chylomicrons. Expressed in liver, intestine and muscle.

It is found in the secreted. Functionally, participates in the reverse transport of cholesterol from tissues to the liver for excretion by promoting cholesterol efflux from tissues and by acting as a cofactor for the lecithin cholesterol acyltransferase (LCAT). The chain is Apolipoprotein A-I (apoa1) from Salmo salar (Atlantic salmon).